The chain runs to 123 residues: Small ribosomal subunit protein uS12 (123 aa).

Aspartate 89 bears the 3-methylthioaspartic acid mark. Positions 104-123 (SVGVKDRKKSRSKYGAKRPK) are disordered. The span at 109 to 123 (DRKKSRSKYGAKRPK) shows a compositional bias: basic residues.

This sequence belongs to the universal ribosomal protein uS12 family. As to quaternary structure, part of the 30S ribosomal subunit. Contacts proteins S8 and S17. May interact with IF1 in the 30S initiation complex.

In terms of biological role, with S4 and S5 plays an important role in translational accuracy. Functionally, interacts with and stabilizes bases of the 16S rRNA that are involved in tRNA selection in the A site and with the mRNA backbone. Located at the interface of the 30S and 50S subunits, it traverses the body of the 30S subunit contacting proteins on the other side and probably holding the rRNA structure together. The combined cluster of proteins S8, S12 and S17 appears to hold together the shoulder and platform of the 30S subunit. The chain is Small ribosomal subunit protein uS12 from Geotalea daltonii (strain DSM 22248 / JCM 15807 / FRC-32) (Geobacter daltonii).